Reading from the N-terminus, the 512-residue chain is MTVYNINLGIGWASSGVEYAQSYRAQAFRNLNISAKFVFSDLILGNNIADLTANLGFNADQIIWLYNFFTDIKIAPSTFLLDTFVEQNHLEQRNFSLLPNNGTKELQYKSEEEKLTIVPRYNNREKQTIDQVTYIFNNRLIKRDFYSYTKYATEYYSGEEKDNQVIFREFYNENGTIAYTQHLDGDGHELFEFPDQNYYSKTDLYREMLRKFNFKADDIIILDRMDEDKQLVNGQLIFEHHLPAKLVIPVHADHYDKHYTNDHQVLWNNFYEYQFMHYQDVAAYVVATDRQRDLLASQQKHFNHAKPQINTIPVGSLEHLVKPKGTRKKHSLITASRLANEKHIDWVIEATVAAHKIVSDLTLDIYGEGGERSRLQNLITKNNADSYIKLMGQHDLKDVYQKYETYIAGSTSEGFGLSLMEAVGSGLSMIGFDVPYGNQTFIVDQQNGYLLPYTEDWSNSRKEQLLADAIVKNFTEADLTSFHEKSYSLAESYLTKNVAKQWQQLIGELQHA.

Residue 16 to 19 (GVEY) coordinates UDP. H251 provides a ligand contact to N-acetyl-D-glucosamine. UDP is bound by residues 393–394 (QH) and 413–416 (EGFG).

It belongs to the glycosyltransferase group 1 family. Glycosyltransferase 4 subfamily. As to quaternary structure, forms a heterotetramer with 2 subunits each of GtfA and GtfB. Part of the accessory SecA2/SecY2 protein translocation apparatus.

Its subcellular location is the cytoplasm. The protein resides in the cell membrane. It catalyses the reaction L-seryl-[protein] + UDP-N-acetyl-alpha-D-glucosamine = 3-O-[N-acetyl-alpha-D-glucosaminyl]-L-seryl-[protein] + UDP + H(+). It participates in protein modification; protein glycosylation. Required for polymorphic O-glycosylation of the serine-rich repeat protein (SRRP) in this bacteria. Catalyzes the first step in glycosylation by transferring N-acetylglucosamine from UDP-GlcNAc to serine residues in the substrate protein. Part of the accessory SecA2/SecY2 system specifically required to export serine-rich repeat cell wall proteins encoded in the same operon. The GtfA-GtfB complex adds GlcNAc from UDP-GlcNAc to SRRP (experimentally characterized with a truncated SSR1 construct); the alpha linkage was shown for this enzyme but not the residues glycosylated on SRRP. The chain is UDP-N-acetylglucosamine--peptide N-acetylglucosaminyltransferase GtfA subunit from Limosilactobacillus reuteri subsp. suis (strain ATCC 53608 / LMG 31752 / 1063) (Lactobacillus reuteri).